The sequence spans 383 residues: uncharacterized protein (383 aa).

Disordered stretches follow at residues 27 to 66 and 242 to 281; these read ENNN…NKKP and LITT…ITRR. Composition is skewed to low complexity over residues 28 to 63 and 242 to 275; these read NNNT…NNNN and LITT…KSSS.

This is an uncharacterized protein from Dictyostelium discoideum (Social amoeba).